The primary structure comprises 405 residues: MEGFRKIEWAERYMKVLGKIREQFRKERPLEGFTVGMALHVEAKTAVLVRTLVDAGAEVAITGCNPMSTQDDVADALRESGIACYAKRGMDVEEYYEALRNVIRAEPDIVIDDGADLIFLLHGEMESYAEKVKGASEETTTGVIRLRAMEREGVLKFPVIAVNDAYTKYLFDNRYGTGQSAIDGVIRATNLLMAGKIVVVAGYGWCGRGIAMRARGMGASVVVTEVDEIRALEAVMDGFRVMRMEDAAKIGDIFITATGNRDIIREEHIRLMKDGAILANAGHFNVEIDIPALERMAKAKREARKYVTEYDLGDKRVYLLAEGRLVNLVAADGHPVEVMDMSFANQALAAKYIAENWQKLERKVYRLPEELDRMVARMKLESMGVEIDQLTEEQVRYLSDWRCGT.

Residues aspartate 113 and glutamate 138 each coordinate substrate. NAD(+) is bound at residue 139-141 (TTT). Lysine 168 and aspartate 172 together coordinate substrate. NAD(+)-binding positions include asparagine 173, 202–207 (GYGWCG), glutamate 225, asparagine 260, 281–283 (AGH), and asparagine 327.

It belongs to the adenosylhomocysteinase family. The cofactor is NAD(+).

It is found in the cytoplasm. It catalyses the reaction S-adenosyl-L-homocysteine + H2O = L-homocysteine + adenosine. It participates in amino-acid biosynthesis; L-homocysteine biosynthesis; L-homocysteine from S-adenosyl-L-homocysteine: step 1/1. Functionally, may play a key role in the regulation of the intracellular concentration of adenosylhomocysteine. The protein is Adenosylhomocysteinase of Archaeoglobus fulgidus (strain ATCC 49558 / DSM 4304 / JCM 9628 / NBRC 100126 / VC-16).